The following is a 150-amino-acid chain: CCAAT/enhancer-binding protein gamma (150 aa).

Lys3 is covalently cross-linked (Glycyl lysine isopeptide (Lys-Gly) (interchain with G-Cter in SUMO2)). Residues 27 to 94 are disordered; that stretch reads GLQQVPQLVP…QKAQDTLQRV (68 aa). Residues 28 to 37 are compositionally biased toward low complexity; the sequence is LQQVPQLVPA. A compositionally biased stretch (basic and acidic residues) spans 56-72; the sequence is SPMDRNSDEYRQRRERN. The bZIP domain maps to 62 to 125; the sequence is SDEYRQRRER…SVLKDLFLEH (64 aa). The basic motif stretch occupies residues 66-93; that stretch reads RQRRERNNMAVKKSRLKSKQKAQDTLQR. The tract at residues 97–118 is leucine-zipper; sequence LKEENERLEAKIKLLTKELSVL. Positions 129 to 150 are disordered; sequence LADNVQPISTETTATNSDNPGQ. Polar residues predominate over residues 134 to 150; that stretch reads QPISTETTATNSDNPGQ.

This sequence belongs to the bZIP family. C/EBP subfamily. Binds DNA as a dimer and can form stable heterodimers with CEBPA. Can form stable heterodimers with CEBPB. Interacts with ZNF638; this interaction increases transcriptional activation. Ubiquitous.

The protein localises to the nucleus. Transcription factor that binds to the promoter and the enhancer regions of target genes. Binds to the promoter and the enhancer of the immunoglobulin heavy chain. Binds to GPE1, a cis-acting element in the G-CSF gene promoter. Binds to the enhancer element PRE-I (positive regulatory element-I) of the IL-4 gene. Binds to the promoter and the enhancer of the alpha-1-fetoprotein gene. This is CCAAT/enhancer-binding protein gamma (Cebpg) from Mus musculus (Mouse).